Consider the following 303-residue polypeptide: UDP-N-acetylenolpyruvoylglucosamine reductase (303 aa).

The 181-residue stretch at 27 to 207 (KVGGISQVFY…TSISQKLQKI (181 aa)) folds into the FAD-binding PCMH-type domain. Arg175 is a catalytic residue. The active-site Proton donor is Ser224. The active site involves Glu294.

Belongs to the MurB family. The cofactor is FAD.

Its subcellular location is the cytoplasm. It catalyses the reaction UDP-N-acetyl-alpha-D-muramate + NADP(+) = UDP-N-acetyl-3-O-(1-carboxyvinyl)-alpha-D-glucosamine + NADPH + H(+). It participates in cell wall biogenesis; peptidoglycan biosynthesis. Cell wall formation. This Orientia tsutsugamushi (strain Boryong) (Rickettsia tsutsugamushi) protein is UDP-N-acetylenolpyruvoylglucosamine reductase.